A 303-amino-acid polypeptide reads, in one-letter code: Recombination-associated protein RdgC (303 aa).

The protein belongs to the RdgC family.

It is found in the cytoplasm. The protein localises to the nucleoid. In terms of biological role, may be involved in recombination. This is Recombination-associated protein RdgC from Shewanella sediminis (strain HAW-EB3).